The primary structure comprises 344 residues: Protein RecA (344 aa).

65–72 provides a ligand contact to ATP; it reads GPESSGKT.

Belongs to the RecA family.

The protein resides in the cytoplasm. Can catalyze the hydrolysis of ATP in the presence of single-stranded DNA, the ATP-dependent uptake of single-stranded DNA by duplex DNA, and the ATP-dependent hybridization of homologous single-stranded DNAs. It interacts with LexA causing its activation and leading to its autocatalytic cleavage. The chain is Protein RecA from Campylobacter lari.